The chain runs to 212 residues: Large ribosomal subunit protein uL3 (212 aa).

The interval 133–156 (SMTHGSKNHRLPGSTGAGTTPGRV) is disordered.

The protein belongs to the universal ribosomal protein uL3 family. Part of the 50S ribosomal subunit. Forms a cluster with proteins L14 and L19.

Functionally, one of the primary rRNA binding proteins, it binds directly near the 3'-end of the 23S rRNA, where it nucleates assembly of the 50S subunit. This is Large ribosomal subunit protein uL3 from Crocosphaera subtropica (strain ATCC 51142 / BH68) (Cyanothece sp. (strain ATCC 51142)).